The following is an 82-amino-acid chain: Small ribosomal subunit protein uS17 (82 aa).

The protein belongs to the universal ribosomal protein uS17 family. In terms of assembly, part of the 30S ribosomal subunit.

One of the primary rRNA binding proteins, it binds specifically to the 5'-end of 16S ribosomal RNA. The chain is Small ribosomal subunit protein uS17 from Shewanella denitrificans (strain OS217 / ATCC BAA-1090 / DSM 15013).